Reading from the N-terminus, the 317-residue chain is L-lactate dehydrogenase (317 aa).

Residues valine 17, aspartate 38, lysine 43, tyrosine 68, and 82–83 (GV) contribute to the NAD(+) site. Arginine 91 is a binding site for substrate. NAD(+) contacts are provided by residues serine 104, 121-123 (VSN), and serine 146. Substrate is bound at residue 123–126 (NPVD). 151-154 (DTSR) provides a ligand contact to substrate. Residues lysine 156 and histidine 171 each contribute to the beta-D-fructose 1,6-bisphosphate site. The active-site Proton acceptor is the histidine 178. Residue tyrosine 224 is modified to Phosphotyrosine. Threonine 233 provides a ligand contact to substrate.

It belongs to the LDH/MDH superfamily. LDH family. Homotetramer.

The protein localises to the cytoplasm. The catalysed reaction is (S)-lactate + NAD(+) = pyruvate + NADH + H(+). Its pathway is fermentation; pyruvate fermentation to lactate; (S)-lactate from pyruvate: step 1/1. Allosterically activated by fructose 1,6-bisphosphate (FBP). Functionally, catalyzes the conversion of lactate to pyruvate. The protein is L-lactate dehydrogenase of Clostridium perfringens (strain ATCC 13124 / DSM 756 / JCM 1290 / NCIMB 6125 / NCTC 8237 / Type A).